Reading from the N-terminus, the 332-residue chain is Formamidase (332 aa).

The region spanning 14–259 (FLTALIQYPV…WEIVTAEVYP (246 aa)) is the CN hydrolase domain. Catalysis depends on Glu-60, which acts as the Proton acceptor. The Proton donor role is filled by Lys-132. The active-site Nucleophile is Cys-165.

It belongs to the carbon-nitrogen hydrolase superfamily. Aliphatic amidase family.

The catalysed reaction is formamide + H2O = formate + NH4(+). Is an aliphatic amidase with a restricted substrate specificity, as it only hydrolyzes formamide. The sequence is that of Formamidase from Bacillus cereus (strain ZK / E33L).